Consider the following 250-residue polypeptide: Ribosomal RNA small subunit methyltransferase G (250 aa).

Residues Gly78, Leu83, 129-130 (AE), and Arg144 each bind S-adenosyl-L-methionine. The segment at 224 to 250 (IAAPRKRGGQQRRAGHARGTSNRRRGT) is disordered. Residues 227-250 (PRKRGGQQRRAGHARGTSNRRRGT) show a composition bias toward basic residues.

Belongs to the methyltransferase superfamily. RNA methyltransferase RsmG family.

The protein localises to the cytoplasm. In terms of biological role, specifically methylates the N7 position of guanine in position 518 of 16S rRNA. The polypeptide is Ribosomal RNA small subunit methyltransferase G (Nocardioides sp. (strain ATCC BAA-499 / JS614)).